A 265-amino-acid chain; its full sequence is SPbeta prophage-derived uncharacterized protein YomU (265 aa).

Residues lysine 238–glutamate 265 are disordered. The span at aspartate 249–glutamate 265 shows a compositional bias: polar residues.

The chain is SPbeta prophage-derived uncharacterized protein YomU (yomU) from Bacillus subtilis (strain 168).